Reading from the N-terminus, the 831-residue chain is Multiphosphoryl transfer protein (831 aa).

Positions 1–90 (MLTIQFLCPL…EYILVRFIDS (90 aa)) constitute an HPr domain. His-15 (pros-phosphohistidine intermediate; for HPr activity) is an active-site residue. At His-15 the chain carries Phosphohistidine; by EI. The tract at residues 119–650 (GNVLASGVGV…AVKSQLRQLD (532 aa)) is PTS EI. His-298 functions as the Tele-phosphohistidine intermediate; for PTS EI activity in the catalytic mechanism. The residue at position 298 (His-298) is a Phosphohistidine; by autocatalysis. Residues Arg-405 and Arg-441 each contribute to the phosphoenolpyruvate site. Residues Glu-540 and Asp-564 each contribute to the Mg(2+) site. Phosphoenolpyruvate-binding positions include 563–564 (ND) and Arg-574. Residue Cys-611 is the Proton donor; for EI activity of the active site. Residues 685 to 828 (PLLALENIFV…QSILTLLETE (144 aa)) form the PTS EIIA type-2 domain. Residue His-747 is the Tele-phosphohistidine intermediate; for PTS EIIA activity of the active site. At His-747 the chain carries Phosphohistidine; by HPr.

It belongs to the PEP-utilizing enzyme family. The cofactor is Mg(2+).

The protein resides in the cytoplasm. It carries out the reaction L-histidyl-[protein] + phosphoenolpyruvate = N(pros)-phospho-L-histidyl-[protein] + pyruvate. The catalysed reaction is D-fructose(out) + N(pros)-phospho-L-histidyl-[protein] = D-fructose 1-phosphate(in) + L-histidyl-[protein]. Multifunctional protein that includes general (non sugar-specific) and sugar-specific components of the phosphoenolpyruvate-dependent sugar phosphotransferase system (sugar PTS). This major carbohydrate active transport system catalyzes the phosphorylation of incoming sugar substrates concomitantly with their translocation across the cell membrane. The enzyme II FryABC PTS system is involved in fructose transport. The chain is Multiphosphoryl transfer protein (fryA) from Shigella flexneri.